A 493-amino-acid polypeptide reads, in one-letter code: Transcription termination factor MTERF5, chloroplastic (493 aa).

The N-terminal 43 residues, 1-43, are a transit peptide targeting the chloroplast; that stretch reads MQSLSQLGPSEIFLVARREKPSTRAQLWFTGRLSFRQETNGIR.

This sequence belongs to the mTERF family. In terms of assembly, interacts with pTAC6. As to expression, expressed in roots, rosette leaves, cauline leaves, stems, flower buds and open flowers.

Its subcellular location is the plastid. It is found in the chloroplast. In terms of biological role, transcription termination factor required for processing and steady-state levels of plastid transcripts. Involved also in chloroplast transcriptional pausing, a general feature of chloroplast genes. Specifically and positively regulates the transcription of chloroplast psbEFLJ encoding for photosystem II (PSII) core subunits psbE, psbF, psbL and psbJ; causes the plastid-encoded RNA polymerase (PEP) complex to pause at psbEFLJ by binding to the +30 to +51 region of double-stranded DNA, and recruits additional pTAC6 to the transcriptionally paused region of psbEFLJ. May play a role in response to abiotic stresses. The polypeptide is Transcription termination factor MTERF5, chloroplastic (Arabidopsis thaliana (Mouse-ear cress)).